A 98-amino-acid chain; its full sequence is Glutaredoxin 1 (98 aa).

The 98-residue stretch at 1–98 folds into the Glutaredoxin domain; that stretch reads MNKAILHAII…KLLEGQPKKD (98 aa). A disulfide bridge links cysteine 17 with cysteine 20.

The protein belongs to the glutaredoxin family. As to quaternary structure, monomer.

The protein localises to the cytoplasm. Its function is as follows. Has a glutathione-disulfide oxidoreductase activity in the presence of NADPH and glutathione reductase. Reduces low molecular weight disulfides and proteins. The chain is Glutaredoxin 1 (grxC1) from Rickettsia bellii (strain RML369-C).